The chain runs to 223 residues: Coiled-coil domain-containing protein 70 (223 aa).

A coiled-coil region spans residues 129–153 (NALWERDRNLLQEDKALWEEEKALW). The disordered stretch occupies residues 199–223 (EQRHQNGPYNANEEPQSTSFPRGRA). The span at 203–223 (QNGPYNANEEPQSTSFPRGRA) shows a compositional bias: polar residues.

This chain is Coiled-coil domain-containing protein 70, found in Mus musculus (Mouse).